The following is a 580-amino-acid chain: Mucolipin-1 (580 aa).

The disordered stretch occupies residues 1 to 38 (MATPAGRRASETERLLTPNPGYGTQVGTSPAPTTPTEE). Over 1-65 (MATPAGRRAS…FRAKGRKPCK (65 aa)) the chain is Cytoplasmic. Residue serine 10 is modified to Phosphoserine. A Dileucine motif; mediates targeting to lysosomes motif is present at residues 11 to 16 (ETERLL). Positions 42 to 62 (RRRLKYFFMSPCDKFRAKGRK) are interaction with phosphoinositides. Residues 66–86 (LMLQVVKILVVTVQLILFGLS) traverse the membrane as a helical segment. Topologically, residues 87 to 298 (NQLVVTFREE…VSRHGDNSFR (212 aa)) are extracellular. An extracellular/lumenal pore loop region spans residues 107–121 (LGYSDGSDDTFAAYT). Residues cysteine 166 and cysteine 192 are joined by a disulfide bond. Residues asparagine 220 and asparagine 230 are each glycosylated (N-linked (GlcNAc...) asparagine). Cysteine 253 and cysteine 284 are joined by a disulfide. Residues 299–321 (LLFDVVVILTCSLSFLLCARSLL) form a helical membrane-spanning segment. At 322-350 (RGFLLQNEFVVFMWRRRGREISLWERLEF) the chain is on the cytoplasmic side. A helical transmembrane segment spans residues 351–371 (VNGWYILLVTSDVLTISGTVM). The Extracellular segment spans residues 372–382 (KIGIEAKNLAS). A helical transmembrane segment spans residues 383–405 (YDVCSILLGTSTLLVWVGVIRYL). At 406 to 427 (TFFHKYNILIATLRVALPSVMR) the chain is on the cytoplasmic side. Residues 428 to 448 (FCCCVAVIYLGYCFCGWIVLG) traverse the membrane as a helical segment. Over 449–456 (PYHVKFRS) the chain is Extracellular. The pore-forming intramembrane region spans 457–477 (LSMVSECLFSLINGDDMFVTF). The Selectivity filter motif lies at 469–474 (NGDDMF). The Extracellular segment spans residues 478–491 (AAMQAQQGHSSLVW). A helical transmembrane segment spans residues 492–513 (LFSQLYLYSFISLFIYMVLSLF). Over 514-580 (IALITGAYDT…SPEDHSLLVN (67 aa)) the chain is Cytoplasmic. A Phosphoserine modification is found at serine 557. Serine 559 carries the post-translational modification Phosphoserine; by PAK. The interval 565 to 567 (CCC) is required for palmitoylation and association with membranes. The Dileucine internalization motif; mediates AP2 complex-dependent internalization motif lies at 573–578 (EDHSLL).

The protein belongs to the transient receptor (TC 1.A.4) family. Polycystin subfamily. MCOLN1 sub-subfamily. Homotetramer. Homooligomer. Can heterooligomerize with MCOLN2 or MCOLN3; heteromeric assemblies have different channel properties as compared to the respective homooligomers and may be tissue-specific. Interacts with PDCD6. Interacts with TMEM163. Interacts with LAPTM4B. In terms of processing, palmitoylated; involved in association with membranes. Post-translationally, phosphorylation by PKA inhibits channel activity. Dephosphorylation increases activity. Proteolytically cleaved probably involving multiple lysosomal proteases including cathepsin B; inhibits lysosomal channel activity. In terms of tissue distribution, widely expressed, with the highest expression in brain, liver and kidney.

It is found in the late endosome membrane. It localises to the lysosome membrane. The protein localises to the cytoplasmic vesicle membrane. Its subcellular location is the cell projection. The protein resides in the phagocytic cup. It is found in the cytoplasmic vesicle. It localises to the phagosome membrane. The protein localises to the cell membrane. It carries out the reaction Ca(2+)(in) = Ca(2+)(out). The catalysed reaction is Fe(2+)(in) = Fe(2+)(out). It catalyses the reaction Mg(2+)(in) = Mg(2+)(out). The enzyme catalyses K(+)(in) = K(+)(out). It carries out the reaction Na(+)(in) = Na(+)(out). With respect to regulation, channel activity is controlled by multiple regulatory mechanisms in different subcellular compartments. Lower pH by itself has an inhibitory effect on channel conductance. Channel function is transiently modulated by changes in Ca(2+) in a pH-dependent manner; pH changes modify the aggregation state of unitary channels; a negative cooperativity between extracellular/lumenal Ca(2+) and H(+) is suggested. Fe(2+) channel activity is potentiated by low pH. Regulated by phosphoinositides in a compartment-specific manner: in lysosomes activated by PtdIns(3,5)P2 (Phosphatidylinositol 3,5-bisphosphate) and at the plasma membrane inhibited by PtdIns(4,5)P2 (Phosphatidylinositol 4,5-bisphosphate). Its function is as follows. Nonselective cation channel probably playing a role in the regulation of membrane trafficking events and of metal homeostasis. Acts as a Ca(2+)-permeable cation channel with inwardly rectifying activity. Proposed to play a major role in Ca(2+) release from late endosome and lysosome vesicles to the cytoplasm, which is important for many lysosome-dependent cellular events, including the fusion and trafficking of these organelles, exocytosis and autophagy. Required for efficient uptake of large particles in macrophages in which Ca(2+) release from the lysosomes triggers lysosomal exocytosis. May also play a role in phagosome-lysosome fusion. Involved in lactosylceramide trafficking indicative for a role in the regulation of late endocytic membrane fusion/fission events. By mediating lysosomal Ca(2+) release is involved in regulation of mTORC1 signaling and in mTOR/TFEB-dependent lysosomal adaptation to environmental cues such as nutrient levels. Seems to act as lysosomal active oxygen species (ROS) sensor involved in ROS-induced TFEB activation and autophagy. Also functions as a Fe(2+) permeable channel in late endosomes and lysosomes. Also permeable to Mg(2+), Na(+). K(+) and Cs(+). Proposed to play a role in zinc homeostasis probably implicating its association with TMEM163. In adaptive immunity, TRPML2 and TRPML1 may play redundant roles in the function of the specialized lysosomes of B cells. In terms of biological role, may contribute to cellular lipase activity within the late endosomal pathway or at the cell surface which may be involved in processes of membrane reshaping and vesiculation, especially the growth of tubular structures. However, it is not known, whether it conveys the enzymatic activity directly, or merely facilitates the activity of an associated phospholipase. The polypeptide is Mucolipin-1 (Mus musculus (Mouse)).